A 455-amino-acid polypeptide reads, in one-letter code: Zinc finger and BTB domain-containing protein 8A.2 (455 aa).

Residues 24 to 92 (CDCHIMIDGH…MYSGKLNLSG (69 aa)) enclose the BTB domain. C2H2-type zinc fingers lie at residues 299-321 (FKCP…LLCH) and 327-350 (YPCQ…RTIH).

It is found in the nucleus. In terms of biological role, may be involved in transcriptional regulation. This chain is Zinc finger and BTB domain-containing protein 8A.2 (zbtb8a.2), found in Xenopus tropicalis (Western clawed frog).